Reading from the N-terminus, the 914-residue chain is Protein ECT2 (914 aa).

Residue Ala2 is modified to N-acetylalanine. BRCT domains are found at residues Leu171–Asp260 and Phe266–Tyr354. Residue Thr359 is modified to Phosphothreonine; by PKC/PRKCI. Phosphoserine occurs at positions 367 and 370. Thr373 carries the post-translational modification Phosphothreonine; by CDK1. Position 376 is a phosphoserine (Ser376). 2 short sequence motifs (nuclear localization signal) span residues Arg378–Arg382 and Pro401–Pro405. The tract at residues Ala388 to Lys449 is disordered. The segment covering Asp418–Tyr429 has biased composition (polar residues). Over residues Thr432 to Lys449 the composition is skewed to low complexity. Thr444 carries the phosphothreonine; by CDK1 modification. Residues Ala452 to Asp641 enclose the DH domain. Residue Lys611 forms a Glycyl lysine isopeptide (Lys-Gly) (interchain with G-Cter in SUMO2) linkage. One can recognise a PH domain in the interval Arg675 to Thr794. Ser716 and Ser842 each carry phosphoserine. Thr846 carries the phosphothreonine; by CDK1 modification. Residues Thr857 to Leu884 are disordered. Phosphoserine is present on residues Ser861 and Ser866.

Homodimer. Homooligomer. Found in the centralspindlin complex. Interacts with NR1I3. Interacts (Thr-359 phosphorylated form) with PARD6A; the interaction is observed in cancer cells. Interacts (Thr-359 phosphorylated form) with PRKCI; the interaction is observed in cancer cells. Interacts with PKP4; the interaction is observed at the midbody. Interacts with RACGAP1/CYK4; the interaction is direct, occurs in a microtubule-dependent manner, occurs at anaphase and during cytokinesis, is inhibited in metaphase by phosphorylation of ECT2 on Thr-373 and is stimulated in early anaphase by dephosphorylation of ECT2 probably on Thr-373 through CDK1 activity. Interacts with PLK1; the interaction is stimulated upon its phosphorylation on Thr-444. Interacts with RHOA; the interaction results in allosteric activation of ECT2. Interacts with KIF23, PARD3, PARD6B and PRKCQ. Interacts with NEDD9/HEF1. Post-translationally, phosphorylated by PLK1 in vitro. Hyperphosphorylated during the G2 phase of the cell cycle. Phosphorylation at Thr-373 occurs during the G2/M phase, relieves its auto-inhibition status and stimulates its GEF activity. Phosphorylation at Thr-444 in G2/M phase is required for subsequent binding with PLK1 and Rho exchange activation. Dephosphorylated at the time of cytokinesis. Phosphorylation at Thr-359 is required for its transformation activity in cancer cells. Expressed in lung epithelial cells (at protein level). Expressed in squamous cell carcinoma, primary non-small cell lung cancer tumors and lung adenocarcinoma.

The protein localises to the nucleus. It is found in the cytoplasm. It localises to the cytoskeleton. Its subcellular location is the spindle. The protein resides in the cleavage furrow. The protein localises to the midbody. It is found in the cell junction. It localises to the tight junction. Its subcellular location is the microtubule organizing center. The protein resides in the centrosome. With respect to regulation, autoinhibited by the C-terminal PH domain which folds back and binds to the surface of the DH domain, blocking binding of RHOA to the catalytic center of the DH domain. The 2nd BRCT domain is also involved in inhibition, probably by helping to impede RHOA binding. Allosterically activated by binding of activated GTP-bound RHOA to the PH domain which stimulates the release of PH inhibition and promotes the binding of substrate RHOA to the catalytic center. Binding of phosphorylated RACGAP1 to the N-terminal BRCT domain-containing region also releases autoinhibition. In terms of biological role, guanine nucleotide exchange factor (GEF) that catalyzes the exchange of GDP for GTP. Promotes guanine nucleotide exchange on the Rho family members of small GTPases, like RHOA, RHOC, RAC1 and CDC42. Required for signal transduction pathways involved in the regulation of cytokinesis. Component of the centralspindlin complex that serves as a microtubule-dependent and Rho-mediated signaling required for the myosin contractile ring formation during the cell cycle cytokinesis. Regulates the translocation of RHOA from the central spindle to the equatorial region. Plays a role in the control of mitotic spindle assembly; regulates the activation of CDC42 in metaphase for the process of spindle fibers attachment to kinetochores before chromosome congression. Involved in the regulation of epithelial cell polarity; participates in the formation of epithelial tight junctions in a polarity complex PARD3-PARD6-protein kinase PRKCQ-dependent manner. Plays a role in the regulation of neurite outgrowth. Inhibits phenobarbital (PB)-induced NR1I3 nuclear translocation. Stimulates the activity of RAC1 through its association with the oncogenic PARD6A-PRKCI complex in cancer cells, thereby acting to coordinately drive tumor cell proliferation and invasion. Also stimulates genotoxic stress-induced RHOB activity in breast cancer cells leading to their cell death. This is Protein ECT2 from Homo sapiens (Human).